Here is a 578-residue protein sequence, read N- to C-terminus: MSSDHKSKFDLELNPFERSFATKESSSVSLNELAAASNNDAISDVNSVATSGSSINNGSSSNKHNLHIPNISSVNQQQGVNGKLPGITPPLFTPGGRRLPPIGLSPGGTTSRQYSNSTNSGSLQSNTDTLGSNIWGGLPTNQTFQPQPQPQPQPQQQQQPQQQQQTQQPHNFNQFMSGMRKTGLTPNESNIRSGLTPGGLTNFGFGSNLVPGLSTPGALLNGPITPGLSSLLGITQTPSSLLVPTTSSFSQNNQSHLIQPAANTSVGPIPESTALGPHVNIPQANQLQQDQSSQALVGGLPPSQPQPQPQPVIAQQIHTIPENQSIAFDMTQPAVANAHLPESKPDLSETANLQRDLNPTADTTTNTTTATKKRKNDTAGGTNKKAKVAKGKKKEPKSKSKGKNNQEDDQNASNKPEDENVPGKENGNEENHKVEAESKEEHLQNGNETTTTKTNNTGNSSNGTTTTTTTKSKSKKNSNVSEDDKRKNFLERNRVAASKCRQRKKLLIQKMEEELEFYSNGYRELSAEVNELRGAILLLKEKHNIQDEIIDGLLSKPTTVPTNVTSIPSTIPTTLNPT.

Residues 39–50 (NDAISDVNSVAT) show a composition bias toward polar residues. 4 disordered regions span residues 39-169 (NDAI…TQQP), 176-195 (MSGM…RSGL), 287-311 (LQQD…QPQP), and 342-489 (ESKP…RKNF). Residues 51 to 62 (SGSSINNGSSSN) show a composition bias toward low complexity. 2 stretches are compositionally biased toward polar residues: residues 70–80 (NISSVNQQQGV) and 107–132 (GGTT…TLGS). Residues 154-169 (PQQQQQPQQQQQTQQP) show a composition bias toward low complexity. The segment covering 184–193 (LTPNESNIRS) has biased composition (polar residues). Composition is skewed to low complexity over residues 287 to 296 (LQQDQSSQAL) and 356 to 370 (DLNP…TTTA). Residues 384-402 (KKAKVAKGKKKEPKSKSKG) are compositionally biased toward basic residues. Residues 415 to 443 (KPEDENVPGKENGNEENHKVEAESKEEHL) are compositionally biased toward basic and acidic residues. Residues 445-471 (NGNETTTTKTNNTGNSSNGTTTTTTTK) show a composition bias toward low complexity. The bZIP domain occupies 483 to 546 (DDKRKNFLER…LLLKEKHNIQ (64 aa)). Residues 485-505 (KRKNFLERNRVAASKCRQRKK) form a basic motif region. The interval 508–515 (IQKMEEEL) is leucine-zipper.

Belongs to the bZIP family. Post-translationally, undergoes HOG1-dependent phosphorylation after osmotic stress.

It is found in the nucleus. Functionally, transcription repressor involved in cell wall damage response. Regulates 79 caspofungin-responsive genes, including several cell wall biogenesis genes such as CRH11, MNN2, and SKN1. Also controls the expression of pathogenesis and hyphal related genes and represses the yeast-to-hypha transition. Mediates the response to oxidative stress. This Candida albicans (strain SC5314 / ATCC MYA-2876) (Yeast) protein is Transcriptional regulator SKO1 (SKO1).